The following is a 285-amino-acid chain: Acetyl-coenzyme A carboxylase carboxyl transferase subunit beta (285 aa).

The region spanning isoleucine 29–asparagine 285 is the CoA carboxyltransferase N-terminal domain. The Zn(2+) site is built by cysteine 33, cysteine 36, cysteine 52, and cysteine 55. The segment at cysteine 33–cysteine 55 adopts a C4-type zinc-finger fold.

Belongs to the AccD/PCCB family. In terms of assembly, acetyl-CoA carboxylase is a heterohexamer composed of biotin carboxyl carrier protein (AccB), biotin carboxylase (AccC) and two subunits each of ACCase subunit alpha (AccA) and ACCase subunit beta (AccD). Requires Zn(2+) as cofactor.

It is found in the cytoplasm. It carries out the reaction N(6)-carboxybiotinyl-L-lysyl-[protein] + acetyl-CoA = N(6)-biotinyl-L-lysyl-[protein] + malonyl-CoA. It functions in the pathway lipid metabolism; malonyl-CoA biosynthesis; malonyl-CoA from acetyl-CoA: step 1/1. Functionally, component of the acetyl coenzyme A carboxylase (ACC) complex. Biotin carboxylase (BC) catalyzes the carboxylation of biotin on its carrier protein (BCCP) and then the CO(2) group is transferred by the transcarboxylase to acetyl-CoA to form malonyl-CoA. This chain is Acetyl-coenzyme A carboxylase carboxyl transferase subunit beta, found in Staphylococcus epidermidis (strain ATCC 35984 / DSM 28319 / BCRC 17069 / CCUG 31568 / BM 3577 / RP62A).